We begin with the raw amino-acid sequence, 287 residues long: Large ribosomal subunit protein uL2 (287 aa).

The tract at residues 203–287 is disordered; sequence LSAGKAGRNR…SKRGRGGRES (85 aa). Basic residues-rich tracts occupy residues 209–220 and 258–287; these read GRNRWKGRRPKV and KTRK…GRES.

The protein belongs to the universal ribosomal protein uL2 family. Part of the 50S ribosomal subunit. Forms a bridge to the 30S subunit in the 70S ribosome.

Functionally, one of the primary rRNA binding proteins. Required for association of the 30S and 50S subunits to form the 70S ribosome, for tRNA binding and peptide bond formation. It has been suggested to have peptidyltransferase activity; this is somewhat controversial. Makes several contacts with the 16S rRNA in the 70S ribosome. This chain is Large ribosomal subunit protein uL2, found in Nostoc sp. (strain PCC 7120 / SAG 25.82 / UTEX 2576).